Reading from the N-terminus, the 782-residue chain is Tripartite terminase subunit 1 (782 aa).

A C3H1-type zinc finger spans residues 190 to 218 (CLQCYEELAAVPNQGRSILKRLRGLLCDH). Residue 666–673 (YNEAFGKE) coordinates ATP. Residues 727–740 (APPPPAAPSPPPAE) are compositionally biased toward pro residues. The disordered stretch occupies residues 727-754 (APPPPAAPSPPPAEPATTAGASRKRPAV).

It belongs to the herpesviridae TRM1 protein family. As to quaternary structure, associates with TRM2 and TRM3 to form the tripartite terminase complex. Interacts with portal protein.

Its subcellular location is the host nucleus. Its function is as follows. Component of the molecular motor that translocates viral genomic DNA in empty capsid during DNA packaging. Forms a tripartite terminase complex together with TRM2 and TRM3 in the host cytoplasm. Once the complex reaches the host nucleus, it interacts with the capsid portal vertex. This portal forms a ring in which genomic DNA is translocated into the capsid. TRM1 carries an endonuclease activity that plays an important role for the cleavage of concatemeric viral DNA into unit length genomes. This is Tripartite terminase subunit 1 from Tupaiid herpesvirus (strain 2) (TuHV-2).